The following is a 989-amino-acid chain: MNKVYNTVWNESTGTWVVTSELTRKGGLRPRQIKRTVLAGLIAGLLMPSMPALAAAYDNQTIGRGETSKSMHLSAGDTAKNTTINSGGKQYVSSGGSATSTTINIGGVQHVSSGGSATSSTINSGGHQHVSSGGSATNTTVNNGGRQTVFSGGSAMGTIINSGGDQYVISGGSATSASVTSGARQFVSSGGIVKATSVNSGGRQYVRDGGSATDTVLNNTGRQFVSSGGSAAKTTINSGGGMYLYGGSATGTSIYNGGRQYVSSGGSATNTTVYSGGRQHVYIDGNVTETTITSGGMLQVEAGGSASKVIQNSGGAVITNTSAAVSGTNDNGSFSIAGGSAVNMLLENGGYLTVFDGHQASDTMVGSDGTLDVRSGGVLYGTTTLTDKGALVGDVVTNEGNLYYLNNSTATFTGTLTGTGTLTQEGGNTRFSGLLSQDGGIFLQSGGAMTMDALQAKANVTTQSGTTLTLDNGTILTGNVAGDSTGAGDMAVKGASVWHLDGDSTVGALTLDNGTVDFRPSTTTRMTPAFQAVSLALGSLSGSGTFQMNTDIASHTGDMLNVAGNASGNFVLDIKNTGLEPVSAGAPLQVVQTGGGDAAFTLKGGKVDAGTWEYGLSKENTNWYLKADTPPPVTPPTNPDADNPDAGNPDAGNPDAGNPDAGNPDAGKPGTGKPDAGTSSSPVRRTTKSVDAVLGMATAPAYVFNSELDNLRFRHGDVMQNTRAPGGVWGRYTGSDNRISGGASSGYTLTQNGFETGADMVFDLSDSSLAVGTFFSYSDNSIKHARGGKSNVDSSGGGLYATWFDNDGYYVDGVLKYNRFNNELRTWMSDGTAVKGDYSQNGFGGSLEAGRTFSLNENAWAQPYVRTTAFRADKKEIRLNNGMKASIGATKSLQAEAGLKLGMTLDVAGKEVKPYLSAAVSHEFSDNNKVRINDTYDFRNDISGTTGKYGLGVNAQLTPNAGVWAEARYENGKQTESPITGGVGFRINF.

An N-terminal signal peptide occupies residues 1 to 54 (MNKVYNTVWNESTGTWVVTSELTRKGGLRPRQIKRTVLAGLIAGLLMPSMPALA). Residues Ser-74, Ser-86, Ser-93, Ser-94, Ser-97, Ser-100, Ser-112, Ser-113, Ser-116, Ser-119, Ser-124, Ser-131, Ser-132, and Ser-135 are each glycosylated (O-alpha-linked (D-glycero-D-manno-heptose) serine). 12 repeat units span residues 82–100 (TTIN…SATS), 101–119 (TTIN…SATS), 120–138 (STIN…SATN), 139–157 (TTVN…SAMG), 158–176 (TIIN…SATS), 177–195 (ASVT…IVKA), 196–214 (TSVN…SATD), 215–233 (TVLN…SAAK), 234–251 (TTIN…SATG), 252–270 (TSIY…SATN), 271–289 (TTVY…NVTE), and 290–308 (TTIT…SASK). Residues 82 to 308 (TTINSGGKQY…QVEAGGSASK (227 aa)) form a 12 X 19 AA approximate repeats region. Residues 110 to 123 (HVSSGGSATSSTIN) are compositionally biased toward polar residues. The tract at residues 110 to 146 (HVSSGGSATSSTINSGGHQHVSSGGSATNTTVNNGGR) is disordered. Residues 124-135 (SGGHQHVSSGGS) are compositionally biased toward low complexity. The span at 136-146 (ATNTTVNNGGR) shows a compositional bias: polar residues. O-alpha-linked (D-glycero-D-manno-heptose) serine glycans are attached at residues Ser-151, Ser-154, Ser-162, Ser-170, Ser-176, Ser-181, Ser-188, Ser-189, Ser-200, Ser-226, Ser-227, Ser-230, Ser-238, Ser-248, Ser-263, Ser-264, Ser-275, Ser-294, Ser-305, Ser-313, and Ser-322. A disordered region spans residues 623-686 (WYLKADTPPP…GTSSSPVRRT (64 aa)). Residues 629-638 (TPPPVTPPTN) show a composition bias toward pro residues. Repeat copies occupy residues 639–643 (PDADN), 644–648 (PDAGN), 649–653 (PDAGN), 654–658 (PDAGN), 659–663 (PDAGN), 664–668 (PDAGK), 669–673 (PGTGK), and 674–678 (PDAGT). Over residues 639 to 667 (PDADNPDAGNPDAGNPDAGNPDAGNPDAG) the composition is skewed to low complexity. The 8 X 5 AA repeats of P-[DG]-[AGT]-[DGA]-[NKT] stretch occupies residues 639-678 (PDADNPDAGNPDAGNPDAGNPDAGNPDAGKPGTGKPDAGT). An Autotransporter domain is found at 721-989 (NTRAPGGVWG…TGGVGFRINF (269 aa)).

Homohexamer. Post-translationally, glycosylated by TibC. Glycosylation is required for adhesion to and invasion of host cells. Glycosylation is dispensable for bacterial autoaggregation and biofilm formation.

Its subcellular location is the cell outer membrane. Its function is as follows. Mediates both adhesion to and invasion of human intestine epithelial cells. Also mediates bacterial cell aggregation via intercellular TibA-TibA interaction. Enhances biofilm formation. The polypeptide is Autotransporter adhesin/invasin TibA (Escherichia coli O78:H11 (strain H10407 / ETEC)).